The sequence spans 599 residues: Aspartate--tRNA(Asp/Asn) ligase (599 aa).

Glu172 is an L-aspartate binding site. Residues Gln196–Lys199 are aspartate. Arg218 is a binding site for L-aspartate. Residues Arg218–Glu220 and Gln227 contribute to the ATP site. His455 provides a ligand contact to L-aspartate. Residue Glu489 participates in ATP binding. Residue Arg496 participates in L-aspartate binding. Gly541–Arg544 contributes to the ATP binding site.

It belongs to the class-II aminoacyl-tRNA synthetase family. Type 1 subfamily. As to quaternary structure, homodimer.

Its subcellular location is the cytoplasm. It carries out the reaction tRNA(Asx) + L-aspartate + ATP = L-aspartyl-tRNA(Asx) + AMP + diphosphate. Functionally, aspartyl-tRNA synthetase with relaxed tRNA specificity since it is able to aspartylate not only its cognate tRNA(Asp) but also tRNA(Asn). Reaction proceeds in two steps: L-aspartate is first activated by ATP to form Asp-AMP and then transferred to the acceptor end of tRNA(Asp/Asn). The polypeptide is Aspartate--tRNA(Asp/Asn) ligase (Herminiimonas arsenicoxydans).